A 140-amino-acid polypeptide reads, in one-letter code: ATP synthase epsilon chain (140 aa).

The protein belongs to the ATPase epsilon chain family. In terms of assembly, F-type ATPases have 2 components, CF(1) - the catalytic core - and CF(0) - the membrane proton channel. CF(1) has five subunits: alpha(3), beta(3), gamma(1), delta(1), epsilon(1). CF(0) has three main subunits: a, b and c.

It localises to the cell inner membrane. Produces ATP from ADP in the presence of a proton gradient across the membrane. The polypeptide is ATP synthase epsilon chain (Colwellia psychrerythraea (strain 34H / ATCC BAA-681) (Vibrio psychroerythus)).